A 143-amino-acid chain; its full sequence is Hemoglobin subunit alpha-1 (143 aa).

Residue Ser2 is modified to N-acetylserine. Positions Ser2–Arg143 constitute a Globin domain. An O2-binding site is contributed by His60. His89 is a binding site for heme b.

It belongs to the globin family. Hb1 is a heterotetramer of two alpha-1 chains and two beta-1 chains. Red blood cells.

Involved in oxygen transport from gills to the various peripheral tissues. The polypeptide is Hemoglobin subunit alpha-1 (hba1) (Anarhichas minor (Arctic spotted wolffish)).